We begin with the raw amino-acid sequence, 185 residues long: Large ribosomal subunit protein uL5 (185 aa).

Belongs to the universal ribosomal protein uL5 family. As to quaternary structure, part of the 50S ribosomal subunit; part of the 5S rRNA/L5/L18/L25 subcomplex. Contacts the 5S rRNA and the P site tRNA. Forms a bridge to the 30S subunit in the 70S ribosome.

This is one of the proteins that bind and probably mediate the attachment of the 5S RNA into the large ribosomal subunit, where it forms part of the central protuberance. In the 70S ribosome it contacts protein S13 of the 30S subunit (bridge B1b), connecting the 2 subunits; this bridge is implicated in subunit movement. Contacts the P site tRNA; the 5S rRNA and some of its associated proteins might help stabilize positioning of ribosome-bound tRNAs. This chain is Large ribosomal subunit protein uL5, found in Bartonella tribocorum (strain CIP 105476 / IBS 506).